We begin with the raw amino-acid sequence, 95 residues long: Integration host factor subunit beta (95 aa).

The tract at residues 52–95 is disordered; the sequence is SLHHRPPRVGRNPKTGESVHLPSRRVPHFKPGKELRDRVNSIKD. Positions 82–95 are enriched in basic and acidic residues; sequence PGKELRDRVNSIKD.

This sequence belongs to the bacterial histone-like protein family. Heterodimer of an alpha and a beta chain.

Its function is as follows. This protein is one of the two subunits of integration host factor, a specific DNA-binding protein that functions in genetic recombination as well as in transcriptional and translational control. This is Integration host factor subunit beta from Methylococcus capsulatus (strain ATCC 33009 / NCIMB 11132 / Bath).